We begin with the raw amino-acid sequence, 319 residues long: Solute carrier family 25 member 34 (319 aa).

Residues Met1–Leu22 are disordered. Residues Ser10–Leu22 show a composition bias toward pro residues. Solcar repeat units lie at residues Leu22 to Ala115, Asp119 to Trp212, and Leu222 to Arg313. 6 helical membrane passes run Pro25–Leu45, Ser63–Gly83, Gly116–Ile138, Val188–Ala209, Ser224–Pro244, and Leu296–His319.

The protein belongs to the mitochondrial carrier (TC 2.A.29) family.

It is found in the mitochondrion inner membrane. The polypeptide is Solute carrier family 25 member 34 (slc25a34) (Danio rerio (Zebrafish)).